Here is a 97-residue protein sequence, read N- to C-terminus: Protein RALF-like 2 (97 aa).

A signal peptide spans 1-25; the sequence is MEARHMLVTILLLSFVFMNIMKVEA. 2 cysteine pairs are disulfide-bonded: cysteine 42/cysteine 49 and cysteine 61/cysteine 67.

The protein belongs to the plant rapid alkalinization factor (RALF) family.

The protein resides in the secreted. In terms of biological role, cell signaling peptide that may regulate plant stress, growth, and development. Mediates a rapid alkalinization of extracellular space by mediating a transient increase in the cytoplasmic Ca(2+) concentration leading to a calcium-dependent signaling events through a cell surface receptor and a concomitant activation of some intracellular mitogen-activated protein kinases. This is Protein RALF-like 2 (RALFL2) from Arabidopsis thaliana (Mouse-ear cress).